The following is a 195-amino-acid chain: ATP-dependent Clp protease proteolytic subunit (195 aa).

Residue Ser96 is the Nucleophile of the active site. His121 is an active-site residue.

The protein belongs to the peptidase S14 family. Fourteen ClpP subunits assemble into 2 heptameric rings which stack back to back to give a disk-like structure with a central cavity, resembling the structure of eukaryotic proteasomes.

It is found in the cytoplasm. It carries out the reaction Hydrolysis of proteins to small peptides in the presence of ATP and magnesium. alpha-casein is the usual test substrate. In the absence of ATP, only oligopeptides shorter than five residues are hydrolyzed (such as succinyl-Leu-Tyr-|-NHMec, and Leu-Tyr-Leu-|-Tyr-Trp, in which cleavage of the -Tyr-|-Leu- and -Tyr-|-Trp bonds also occurs).. Cleaves peptides in various proteins in a process that requires ATP hydrolysis. Has a chymotrypsin-like activity. Plays a major role in the degradation of misfolded proteins. This chain is ATP-dependent Clp protease proteolytic subunit, found in Elusimicrobium minutum (strain Pei191).